The following is a 201-amino-acid chain: Large ribosomal subunit protein uL4 (201 aa).

A disordered region spans residues 46-71 (QKTRAEITGTGKKPWRQKGTGRARAG).

Belongs to the universal ribosomal protein uL4 family. In terms of assembly, part of the 50S ribosomal subunit.

Functionally, one of the primary rRNA binding proteins, this protein initially binds near the 5'-end of the 23S rRNA. It is important during the early stages of 50S assembly. It makes multiple contacts with different domains of the 23S rRNA in the assembled 50S subunit and ribosome. Forms part of the polypeptide exit tunnel. The chain is Large ribosomal subunit protein uL4 from Shewanella amazonensis (strain ATCC BAA-1098 / SB2B).